The sequence spans 379 residues: MSGLEAIWWRERPGPLGALAGAPLLLAEAPFRAAAALRGALYDRGVLPAVRAGAPVVSIGNLAVGGAGKTPAALAVAARLAGRGRRVAILSRGYGAARADARVASDGAGALLPAAEAGDEPALLARRLPGVAVLCGPRRAELARTAVEALGADALVLDDGFQHRALARDLDVVVLDASNPFGNGHLLPRGPNREPRTALRRAGLVWLSHADRAAPERLEALRALARDATGRAPVESRHAATALLDGALREAGSLEALRGRRVAALSGLARPAGFLRTLEALGAEVALARAFPDHHRFTAGELEAVLRDGDAAGCAWVVTTEKDAVRLDPALAAGAAGRLRVVRVDAELLRGADVLEAALDAALAAAAPQPRPAPRAPVS.

63 to 70 (AVGGAGKT) contacts ATP.

Belongs to the LpxK family.

It carries out the reaction a lipid A disaccharide + ATP = a lipid IVA + ADP + H(+). The protein operates within glycolipid biosynthesis; lipid IV(A) biosynthesis; lipid IV(A) from (3R)-3-hydroxytetradecanoyl-[acyl-carrier-protein] and UDP-N-acetyl-alpha-D-glucosamine: step 6/6. Functionally, transfers the gamma-phosphate of ATP to the 4'-position of a tetraacyldisaccharide 1-phosphate intermediate (termed DS-1-P) to form tetraacyldisaccharide 1,4'-bis-phosphate (lipid IVA). The polypeptide is Tetraacyldisaccharide 4'-kinase (Anaeromyxobacter dehalogenans (strain 2CP-1 / ATCC BAA-258)).